A 2149-amino-acid chain; its full sequence is Oxygen-regulated protein 1 (2149 aa).

Positions 1-20 (MSDTPSTGFSMIHPTSSEGQ) are enriched in polar residues. Residues 1–25 (MSDTPSTGFSMIHPTSSEGQVPSPR) are disordered. The region spanning 36-118 (KRISFYKSGD…GRKVQPVDLD (83 aa)) is the Doublecortin 1 domain. A disordered region spans residues 127–148 (WLSSRAVSTHAPPHSVAAPGMP). In terms of domain architecture, Doublecortin 2 spans 152–231 (RSLVVFRNGD…REPFKPGNYD (80 aa)). Disordered regions lie at residues 351 to 373 (VSKT…RTES), 1435 to 1456 (MEEP…SSER), and 1583 to 1613 (VTSD…SGEL). A compositionally biased stretch (polar residues) spans 1446–1456 (SVTNSVTSSER).

Interacts (via the doublecortin domains) with microtubules. Interacts with RP1L1. Interacts with MAK.

It is found in the cytoplasm. The protein resides in the cytoskeleton. It localises to the cilium axoneme. Its subcellular location is the cell projection. The protein localises to the cilium. It is found in the photoreceptor outer segment. Its function is as follows. Microtubule-associated protein regulating the stability and length of the microtubule-based axoneme of photoreceptors. Required for the differentiation of photoreceptor cells, it plays a role in the organization of the outer segment of rod and cone photoreceptors ensuring the correct orientation and higher-order stacking of outer segment disks along the photoreceptor axoneme. This Saimiri boliviensis boliviensis (Bolivian squirrel monkey) protein is Oxygen-regulated protein 1 (RP1).